The chain runs to 339 residues: O-methyltransferase 7 (339 aa).

S-adenosyl-L-methionine is bound by residues glycine 186, aspartate 209, serine 232, phenylalanine 233, and lysine 246. Histidine 250 (proton acceptor) is an active-site residue.

The protein belongs to the class I-like SAM-binding methyltransferase superfamily. Cation-independent O-methyltransferase family. COMT subfamily.

The enzyme catalyses (3,5-dichloro-2,4,6-trihydroxyphenyl)hexan-1-one + S-adenosyl-L-methionine = 1-(3,5-dichloro-2,6-dihydroxy-4-methoxyphenyl)hexan-1-one + S-adenosyl-L-homocysteine + H(+). The polypeptide is O-methyltransferase 7 (omt7) (Dictyostelium discoideum (Social amoeba)).